A 755-amino-acid polypeptide reads, in one-letter code: Atypical kinase coq-8, mitochondrial (755 aa).

Residues 57-78 are disordered; the sequence is QDVDPLKEPNKTNAPLLSPTLP. Residues 67 to 78 are compositionally biased toward polar residues; sequence KTNAPLLSPTLP. Residues 435–443 and Lys-457 each bind ATP; that span reads FACASIGQV. Catalysis depends on Asp-587, which acts as the Proton acceptor.

Belongs to the protein kinase superfamily. ADCK protein kinase family.

The protein resides in the mitochondrion. It participates in cofactor biosynthesis; ubiquinone biosynthesis. Atypical kinase involved in the biosynthesis of coenzyme Q, also named ubiquinone, an essential lipid-soluble electron transporter for aerobic cellular respiration. Its substrate specificity is still unclear: may act as a protein kinase that mediates phosphorylation of coq-3. According to other reports, acts as a small molecule kinase, possibly a lipid kinase that phosphorylates a prenyl lipid in the ubiquinone biosynthesis pathway, as suggested by its ability to bind coenzyme Q lipid intermediates. The chain is Atypical kinase coq-8, mitochondrial (coq-8) from Caenorhabditis elegans.